Consider the following 1593-residue polypeptide: ABC transporter C family member 8 (1593 aa).

10 helical membrane-spanning segments follow: residues 27-47 (VVMT…LYYL), 75-95 (VIVS…IVSI), 100-120 (FEIL…GLVY), 135-155 (LYWV…TLAI), 169-189 (FSYF…VLFF), 280-300 (FYIA…GPTL), 318-338 (YDGL…SLLL), 392-412 (LCPY…SLVL), 419-439 (ASVF…LAIS), and 505-525 (LLLW…VYIL). The 282-residue stretch at 280–561 (FYIAALFKII…LPSVVSSIIE (282 aa)) folds into the ABC transmembrane type-1 1 domain. Positions 594-818 (VKIDNATLEW…GSHFTELMSH (225 aa)) constitute an ABC transporter 1 domain. 627–634 (GQVGSGKS) is a binding site for ATP. The disordered stretch occupies residues 816 to 938 (MSHDEQQQQL…PLQKGEKSSV (123 aa)). Residues 844-875 (GDNKESENNEEQNEEEEGENENLLEKVLRKSR) are a coiled coil. Residues 851 to 865 (NNEEQNEEEEGENEN) are compositionally biased toward acidic residues. Residues 877-886 (RSPSPSSNRN) show a composition bias toward low complexity. The span at 905–922 (EEDEQDERELMEDIDIDG) shows a compositional bias: acidic residues. Transmembrane regions (helical) follow at residues 1005–1025 (IGVL…LLSI), 1064–1084 (AKYY…ATFL), 1157–1177 (IIVI…VGAL), 1251–1271 (LAIR…LYTV), and 1280–1300 (GTAG…NWMV). Residues 1010–1308 (ATCIIGFYVL…MVRMSCDLEN (299 aa)) form the ABC transmembrane type-1 2 domain. The ABC transporter 2 domain occupies 1344–1578 (IVFKNLWLTY…QDSIYYSLVK (235 aa)). 1378–1385 (GRTGAGKS) contacts ATP.

Belongs to the ABC transporter superfamily. ABCC family. Conjugate transporter (TC 3.A.1.208) subfamily.

The protein resides in the membrane. This is ABC transporter C family member 8 (abcC8) from Dictyostelium discoideum (Social amoeba).